The chain runs to 84 residues: Small ribosomal subunit protein eS27w (84 aa).

The segment at 39-61 (CQGCFNITTVFSHSQTVVVCGNC) adopts a C4-type zinc-finger fold.

This sequence belongs to the eukaryotic ribosomal protein eS27 family. Zn(2+) serves as cofactor.

In Arabidopsis thaliana (Mouse-ear cress), this protein is Small ribosomal subunit protein eS27w (RPS27D).